The primary structure comprises 560 residues: Putative transport protein VP1232 (560 aa).

A run of 5 helical transmembrane segments spans residues 8-28 (LLDQ…LAIG), 37-57 (LGNS…GFSF), 66-86 (FMLF…GIFF), 91-111 (HYFI…YGLS), and 164-184 (VGYA…AKLL). 2 consecutive RCK C-terminal domains span residues 205–292 (LGNS…FRNG) and 293–376 (KEVF…KIGF). Helical transmembrane passes span 386–406 (LLAF…TMTF), 409–429 (VSFS…LGFL), 443–463 (ALNM…GLSA), 478–498 (VIGL…LVGA), 506–526 (ALLF…DVVN), and 539–559 (AGTY…LIIL).

This sequence belongs to the AAE transporter (TC 2.A.81) family. YbjL subfamily.

It localises to the cell membrane. The sequence is that of Putative transport protein VP1232 from Vibrio parahaemolyticus serotype O3:K6 (strain RIMD 2210633).